Here is a 493-residue protein sequence, read N- to C-terminus: Probable cytosol aminopeptidase (493 aa).

Residues Lys259 and Asp264 each contribute to the Mn(2+) site. The active site involves Lys271. Residues Asp282, Asp341, and Glu343 each contribute to the Mn(2+) site. The active site involves Arg345.

Belongs to the peptidase M17 family. Mn(2+) serves as cofactor.

It localises to the cytoplasm. It catalyses the reaction Release of an N-terminal amino acid, Xaa-|-Yaa-, in which Xaa is preferably Leu, but may be other amino acids including Pro although not Arg or Lys, and Yaa may be Pro. Amino acid amides and methyl esters are also readily hydrolyzed, but rates on arylamides are exceedingly low.. It carries out the reaction Release of an N-terminal amino acid, preferentially leucine, but not glutamic or aspartic acids.. In terms of biological role, presumably involved in the processing and regular turnover of intracellular proteins. Catalyzes the removal of unsubstituted N-terminal amino acids from various peptides. The polypeptide is Probable cytosol aminopeptidase (Bacillus cytotoxicus (strain DSM 22905 / CIP 110041 / 391-98 / NVH 391-98)).